The following is a 235-amino-acid chain: NAD(P)H-quinone oxidoreductase subunit K (235 aa).

Residues cysteine 52, cysteine 53, cysteine 117, and cysteine 148 each coordinate [4Fe-4S] cluster. A compositionally biased stretch (low complexity) spans 216–226 (AGAAVAPQLPV). Residues 216–235 (AGAAVAPQLPVTEKEGRDRA) are disordered.

This sequence belongs to the complex I 20 kDa subunit family. In terms of assembly, NDH-1 can be composed of about 15 different subunits; different subcomplexes with different compositions have been identified which probably have different functions. The cofactor is [4Fe-4S] cluster.

The protein resides in the cellular thylakoid membrane. The enzyme catalyses a plastoquinone + NADH + (n+1) H(+)(in) = a plastoquinol + NAD(+) + n H(+)(out). It catalyses the reaction a plastoquinone + NADPH + (n+1) H(+)(in) = a plastoquinol + NADP(+) + n H(+)(out). NDH-1 shuttles electrons from an unknown electron donor, via FMN and iron-sulfur (Fe-S) centers, to quinones in the respiratory and/or the photosynthetic chain. The immediate electron acceptor for the enzyme in this species is believed to be plastoquinone. Couples the redox reaction to proton translocation, and thus conserves the redox energy in a proton gradient. Cyanobacterial NDH-1 also plays a role in inorganic carbon-concentration. The polypeptide is NAD(P)H-quinone oxidoreductase subunit K (Synechococcus elongatus (strain ATCC 33912 / PCC 7942 / FACHB-805) (Anacystis nidulans R2)).